We begin with the raw amino-acid sequence, 360 residues long: NAD(P)H-quinone oxidoreductase subunit 1, chloroplastic (360 aa).

Helical transmembrane passes span 27–47, 98–118, 129–149, 165–185, 203–223, 248–268, 269–289, 297–317, and 340–360; these read IWIF…VLVI, FSIG…VIPF, IGIF…LMSG, AAQS…ISLL, FWGW…ISSL, YSGI…LISS, LFVT…ISIL, IFGT…FLFI, and FLLP…LFSL.

Belongs to the complex I subunit 1 family. As to quaternary structure, NDH is composed of at least 16 different subunits, 5 of which are encoded in the nucleus.

The protein resides in the plastid. It localises to the chloroplast thylakoid membrane. It catalyses the reaction a plastoquinone + NADH + (n+1) H(+)(in) = a plastoquinol + NAD(+) + n H(+)(out). The catalysed reaction is a plastoquinone + NADPH + (n+1) H(+)(in) = a plastoquinol + NADP(+) + n H(+)(out). NDH shuttles electrons from NAD(P)H:plastoquinone, via FMN and iron-sulfur (Fe-S) centers, to quinones in the photosynthetic chain and possibly in a chloroplast respiratory chain. The immediate electron acceptor for the enzyme in this species is believed to be plastoquinone. Couples the redox reaction to proton translocation, and thus conserves the redox energy in a proton gradient. The polypeptide is NAD(P)H-quinone oxidoreductase subunit 1, chloroplastic (Lepidium virginicum (Virginia pepperweed)).